Consider the following 108-residue polypeptide: FK506-binding protein 1 (108 aa).

One can recognise a PPIase FKBP-type domain in the interval 20 to 108; the sequence is GDAVTIHYVG…VFDVELLGIN (89 aa).

Belongs to the FKBP-type PPIase family. FKBP1 subfamily.

It is found in the cytoplasm. It carries out the reaction [protein]-peptidylproline (omega=180) = [protein]-peptidylproline (omega=0). With respect to regulation, inhibited by both FK506 and rapamycin. Functionally, PPIases accelerate the folding of proteins. It catalyzes the cis-trans isomerization of proline imidic peptide bonds in oligopeptides. The sequence is that of FK506-binding protein 1 (FPR1) from Yarrowia lipolytica (strain CLIB 122 / E 150) (Yeast).